Reading from the N-terminus, the 661-residue chain is UvrABC system protein C (661 aa).

Residues 25–104 enclose the GIY-YIG domain; that stretch reads AEPGCYLMRD…IKNHQPHFNV (80 aa). The region spanning 214–249 is the UVR domain; it reads DELQHLLQEQMERYAERMDYESAARVRDQLQGLDQL. Residues 636–652 show a composition bias toward basic and acidic residues; that stretch reads FFHPSDEGTDADARAAL. The tract at residues 636–661 is disordered; sequence FFHPSDEGTDADARAALEEQPQELSA.

Belongs to the UvrC family. In terms of assembly, interacts with UvrB in an incision complex.

It localises to the cytoplasm. Its function is as follows. The UvrABC repair system catalyzes the recognition and processing of DNA lesions. UvrC both incises the 5' and 3' sides of the lesion. The N-terminal half is responsible for the 3' incision and the C-terminal half is responsible for the 5' incision. In Synechococcus sp. (strain CC9605), this protein is UvrABC system protein C.